Reading from the N-terminus, the 141-residue chain is Nucleoside diphosphate kinase (141 aa).

ATP is bound by residues Lys-11, Phe-59, Arg-87, Thr-93, Arg-104, and Asn-114. His-117 (pros-phosphohistidine intermediate) is an active-site residue.

Belongs to the NDK family. In terms of assembly, homotetramer. Requires Mg(2+) as cofactor.

It localises to the cytoplasm. It carries out the reaction a 2'-deoxyribonucleoside 5'-diphosphate + ATP = a 2'-deoxyribonucleoside 5'-triphosphate + ADP. The enzyme catalyses a ribonucleoside 5'-diphosphate + ATP = a ribonucleoside 5'-triphosphate + ADP. Its function is as follows. Major role in the synthesis of nucleoside triphosphates other than ATP. The ATP gamma phosphate is transferred to the NDP beta phosphate via a ping-pong mechanism, using a phosphorylated active-site intermediate. This chain is Nucleoside diphosphate kinase, found in Methylibium petroleiphilum (strain ATCC BAA-1232 / LMG 22953 / PM1).